The following is a 312-amino-acid chain: Ribonuclease HIII (312 aa).

In terms of domain architecture, RNase H type-2 spans 95-311 (FNCIGSDEAG…REKAQKILKP (217 aa)). Residues aspartate 101, glutamate 102, and aspartate 206 each coordinate a divalent metal cation.

Belongs to the RNase HII family. RnhC subfamily. Mn(2+) serves as cofactor. Mg(2+) is required as a cofactor.

It localises to the cytoplasm. It catalyses the reaction Endonucleolytic cleavage to 5'-phosphomonoester.. In terms of biological role, endonuclease that specifically degrades the RNA of RNA-DNA hybrids. In Staphylococcus aureus (strain MSSA476), this protein is Ribonuclease HIII.